Here is a 77-residue protein sequence, read N- to C-terminus: Conotoxin S6.11 (77 aa).

Positions 1–19 are cleaved as a signal peptide; that stretch reads MEKLTILLLVAAVLMSTQA. The propeptide occupies 20 to 50; the sequence is LIQGGLDERQKAKSNFFSKRKSNAESWWEGE. 3 cysteine pairs are disulfide-bonded: cysteine 51/cysteine 65, cysteine 58/cysteine 69, and cysteine 64/cysteine 74.

It belongs to the conotoxin O2 superfamily. In terms of tissue distribution, expressed by the venom duct.

Its subcellular location is the secreted. In Conus striatus (Striated cone), this protein is Conotoxin S6.11.